A 272-amino-acid chain; its full sequence is Exosome complex component MTR3 (272 aa).

The interval 1 to 36 (MPGDHRRIRGPEESQPPQLYAADEEEAPGTRDPTRL) is disordered.

The protein belongs to the RNase PH family. Component of the RNA exosome core complex (Exo-9), composed of EXOSC1, EXOSC2, EXOSC3, EXOSC4, EXOSC5, EXOSC6, EXOSC7, EXOSC8 and EXOSC9; within the complex interacts with EXOSC1, EXOSC7 and EXOSC8. The catalytically inactive Exo-9 may associate with the catalytic subunit EXOSC10/RRP6. Exo-9 may associate with DIS3 to form the nucleolar exosome complex, or DIS3L to form the cytoplasmic exosome complex. Exo-9 is formed by a hexameric base ring consisting of the heterodimers EXOSC4-EXOSC9, EXOSC5-EXOSC8 and EXOSC6-EXOSC7, and a cap ring consisting of EXOSC1, EXOSC2 and EXOSC3. The RNA exosome complex associates with cofactors EXOSC10/RRP6, C1D/RRP47, MPHOSPH6/MPP6 and MTREX/MTR4.

Its subcellular location is the cytoplasm. It localises to the nucleus. The protein resides in the nucleolus. In terms of biological role, non-catalytic component of the RNA exosome complex which has 3'-&gt;5' exoribonuclease activity and participates in a multitude of cellular RNA processing and degradation events. In the nucleus, the RNA exosome complex is involved in proper maturation of stable RNA species such as rRNA, snRNA and snoRNA, in the elimination of RNA processing by-products and non-coding 'pervasive' transcripts, such as antisense RNA species and promoter-upstream transcripts (PROMPTs), and of mRNAs with processing defects, thereby limiting or excluding their export to the cytoplasm. The RNA exosome may be involved in Ig class switch recombination (CSR) and/or Ig variable region somatic hypermutation (SHM) by targeting AICDA deamination activity to transcribed dsDNA substrates. In the cytoplasm, the RNA exosome complex is involved in general mRNA turnover and specifically degrades inherently unstable mRNAs containing AU-rich elements (AREs) within their 3' untranslated regions, and in RNA surveillance pathways, preventing translation of aberrant mRNAs. It seems to be involved in degradation of histone mRNA. The catalytic inactive RNA exosome core complex of 9 subunits (Exo-9) is proposed to play a pivotal role in the binding and presentation of RNA for ribonucleolysis, and to serve as a scaffold for the association with catalytic subunits and accessory proteins or complexes. In Homo sapiens (Human), this protein is Exosome complex component MTR3 (EXOSC6).